Consider the following 329-residue polypeptide: Putative dehydrogenase RB0419 (329 aa).

It belongs to the ornithine cyclodeaminase/mu-crystallin family.

This Rhizobium meliloti (strain 1021) (Ensifer meliloti) protein is Putative dehydrogenase RB0419.